The primary structure comprises 348 residues: Ribosomal RNA small subunit methyltransferase C (348 aa).

The protein belongs to the methyltransferase superfamily. RsmC family. Monomer.

It is found in the cytoplasm. It catalyses the reaction guanosine(1207) in 16S rRNA + S-adenosyl-L-methionine = N(2)-methylguanosine(1207) in 16S rRNA + S-adenosyl-L-homocysteine + H(+). Functionally, specifically methylates the guanine in position 1207 of 16S rRNA in the 30S particle. This is Ribosomal RNA small subunit methyltransferase C from Pectobacterium atrosepticum (strain SCRI 1043 / ATCC BAA-672) (Erwinia carotovora subsp. atroseptica).